The primary structure comprises 303 residues: Acetaldehyde dehydrogenase 1 (303 aa).

The active-site Acyl-thioester intermediate is the C130. NAD(+)-binding positions include 161 to 169 and N272; that span reads SVGPGTRKN.

It belongs to the acetaldehyde dehydrogenase family.

The enzyme catalyses acetaldehyde + NAD(+) + CoA = acetyl-CoA + NADH + H(+). This Methylibium petroleiphilum (strain ATCC BAA-1232 / LMG 22953 / PM1) protein is Acetaldehyde dehydrogenase 1.